We begin with the raw amino-acid sequence, 369 residues long: Histidinol-phosphate aminotransferase 2 (369 aa).

N6-(pyridoxal phosphate)lysine is present on K231.

This sequence belongs to the class-II pyridoxal-phosphate-dependent aminotransferase family. Histidinol-phosphate aminotransferase subfamily. As to quaternary structure, homodimer. Pyridoxal 5'-phosphate is required as a cofactor.

It carries out the reaction L-histidinol phosphate + 2-oxoglutarate = 3-(imidazol-4-yl)-2-oxopropyl phosphate + L-glutamate. Its pathway is amino-acid biosynthesis; L-histidine biosynthesis; L-histidine from 5-phospho-alpha-D-ribose 1-diphosphate: step 7/9. The sequence is that of Histidinol-phosphate aminotransferase 2 from Legionella pneumophila (strain Paris).